The chain runs to 1142 residues: Protein lin-25 (1142 aa).

Positions 600–613 are enriched in acidic residues; it reads IEEEIEEEEEDIEP. A disordered region spans residues 600-706; the sequence is IEEEIEEEEE…EKPKEPLEPT (107 aa). Basic and acidic residues-rich tracts occupy residues 614–627, 652–662, and 679–703; these read EVVK…TEKE, DEQKTEEKMDT, and DPPK…KEPL.

Its subcellular location is the nucleus. It localises to the cytoplasm. Participates in the inductive signaling pathway downstream of let-60 Ras and the RAF/MAP kinase cascade to regulate specification and differentiation of many cell types. Positively regulates the fate of vulval precursor cells. Required for induction of the P12 and excretory duct cell fates. In males, it is also required for proper formation of spicules. Does not function in the signaling pathway that promotes exit from pachytene. This Caenorhabditis briggsae protein is Protein lin-25.